A 122-amino-acid polypeptide reads, in one-letter code: Large ribosomal subunit protein uL14 (122 aa).

This sequence belongs to the universal ribosomal protein uL14 family. Part of the 50S ribosomal subunit. Forms a cluster with proteins L3 and L19. In the 70S ribosome, L14 and L19 interact and together make contacts with the 16S rRNA in bridges B5 and B8.

Its function is as follows. Binds to 23S rRNA. Forms part of two intersubunit bridges in the 70S ribosome. The sequence is that of Large ribosomal subunit protein uL14 from Bifidobacterium adolescentis (strain ATCC 15703 / DSM 20083 / NCTC 11814 / E194a).